The following is a 232-amino-acid chain: Enolase-phosphatase E1 (232 aa).

It belongs to the HAD-like hydrolase superfamily. MasA/MtnC family. Monomer. Mg(2+) serves as cofactor.

The enzyme catalyses 5-methylsulfanyl-2,3-dioxopentyl phosphate + H2O = 1,2-dihydroxy-5-(methylsulfanyl)pent-1-en-3-one + phosphate. Its pathway is amino-acid biosynthesis; L-methionine biosynthesis via salvage pathway; L-methionine from S-methyl-5-thio-alpha-D-ribose 1-phosphate: step 3/6. The protein operates within amino-acid biosynthesis; L-methionine biosynthesis via salvage pathway; L-methionine from S-methyl-5-thio-alpha-D-ribose 1-phosphate: step 4/6. Its function is as follows. Bifunctional enzyme that catalyzes the enolization of 2,3-diketo-5-methylthiopentyl-1-phosphate (DK-MTP-1-P) into the intermediate 2-hydroxy-3-keto-5-methylthiopentenyl-1-phosphate (HK-MTPenyl-1-P), which is then dephosphorylated to form the acireductone 1,2-dihydroxy-3-keto-5-methylthiopentene (DHK-MTPene). In Xylella fastidiosa (strain M12), this protein is Enolase-phosphatase E1.